The following is a 201-amino-acid chain: Probable cytokinin riboside 5'-monophosphate phosphoribohydrolase LOG6 (201 aa).

Residues Glu89, 107–108 (RK), 124–130 (GYGTLEE), and Thr136 contribute to the substrate site.

The protein belongs to the LOG family.

It carries out the reaction N(6)-(dimethylallyl)adenosine 5'-phosphate + H2O = N(6)-dimethylallyladenine + D-ribose 5-phosphate. It catalyses the reaction 9-ribosyl-trans-zeatin 5'-phosphate + H2O = trans-zeatin + D-ribose 5-phosphate. Functionally, cytokinin-activating enzyme working in the direct activation pathway. Phosphoribohydrolase that converts inactive cytokinin nucleotides to the biologically active free-base forms. This is Probable cytokinin riboside 5'-monophosphate phosphoribohydrolase LOG6 (LOG6) from Arabidopsis thaliana (Mouse-ear cress).